Reading from the N-terminus, the 366-residue chain is Molybdenum import ATP-binding protein ModC (366 aa).

The ABC transporter domain occupies 1–231; that stretch reads MSEVILQLQK…KAMRPWQSFS (231 aa). 33–40 is an ATP binding site; sequence GRSGAGKT. In terms of domain architecture, Mop spans 292–361; sequence ASSIRNILPA…IKGVSVAQRD (70 aa).

Belongs to the ABC transporter superfamily. Molybdate importer (TC 3.A.1.8) family. The complex is composed of two ATP-binding proteins (ModC), two transmembrane proteins (ModB) and a solute-binding protein (ModA).

It is found in the cell inner membrane. The enzyme catalyses molybdate(out) + ATP + H2O = molybdate(in) + ADP + phosphate + H(+). In terms of biological role, part of the ABC transporter complex ModABC involved in molybdenum import. Responsible for energy coupling to the transport system. The protein is Molybdenum import ATP-binding protein ModC of Vibrio cholerae serotype O1 (strain ATCC 39315 / El Tor Inaba N16961).